The chain runs to 259 residues: 2,3-dihydroxy-2,3-dihydro-p-cumate dehydrogenase (259 aa).

An NAD(+)-binding site is contributed by 18-42 (VTGGAHGIGLGIVERLLGLGARVTA). Catalysis depends on Y163, which acts as the Proton acceptor.

This sequence belongs to the short-chain dehydrogenases/reductases (SDR) family.

It carries out the reaction (2R,3S)-2,3-dihydroxy-2,3-dihydro-p-cumate + NAD(+) = 2,3-dihydroxy-p-cumate + NADH + H(+). It functions in the pathway aromatic compound metabolism; p-cumate degradation; acetaldehyde and pyruvate from p-cumate: step 2/7. This chain is 2,3-dihydroxy-2,3-dihydro-p-cumate dehydrogenase (cmtB), found in Pseudomonas putida (strain ATCC 700007 / DSM 6899 / JCM 31910 / BCRC 17059 / LMG 24140 / F1).